We begin with the raw amino-acid sequence, 617 residues long: mRNA-decapping enzyme 1B (617 aa).

At alanine 2 the chain carries N-acetylalanine. Serine 147 carries the post-translational modification Phosphoserine. Residue tyrosine 191 is modified to Phosphotyrosine. Disordered regions lie at residues 195 to 222 and 243 to 266; these read NLIK…LDPE and TVEP…KLPI. The span at 205-219 shows a compositional bias: polar residues; the sequence is SENQQQRIPQPNQTL. Positions 252–261 are enriched in low complexity; the sequence is QQQQQQQQQQ. A phosphoserine mark is found at serine 275 and serine 336. Residues 362-426 are disordered; it reads TPGAANKCDP…VGHQAHGREQ (65 aa). The segment covering 371–381 has biased composition (low complexity); the sequence is PSTPAPASSAA. A Phosphothreonine modification is found at threonine 392. Phosphoserine is present on residues serine 448 and serine 511.

It belongs to the DCP1 family. In terms of assembly, interacts with DCP1A. (Microbial infection) Interacts with rotavirus A non-structural protein 2; this interaction probably plays a role in the sequestration of DCP1B in viral factories. Interacts with rotavirus A non-structural protein 5; this interaction probably plays a role in its sequestration in viral factories.

The protein resides in the cytoplasm. The protein localises to the nucleus. It carries out the reaction a 5'-end (N(7)-methyl 5'-triphosphoguanosine)-ribonucleoside in mRNA + H2O = N(7)-methyl-GDP + a 5'-end phospho-ribonucleoside in mRNA + 2 H(+). Functionally, may play a role in the degradation of mRNAs, both in normal mRNA turnover and in nonsense-mediated mRNA decay. May remove the 7-methyl guanine cap structure from mRNA molecules, yielding a 5'-phosphorylated mRNA fragment and 7m-GDP. The sequence is that of mRNA-decapping enzyme 1B (DCP1B) from Homo sapiens (Human).